A 628-amino-acid chain; its full sequence is tRNA uridine 5-carboxymethylaminomethyl modification enzyme MnmG (628 aa).

14 to 19 is an FAD binding site; that stretch reads GAGHAG. 274–288 contacts NAD(+); sequence GPRYCPSIEDKIVRF.

This sequence belongs to the MnmG family. As to quaternary structure, homodimer. Heterotetramer of two MnmE and two MnmG subunits. Requires FAD as cofactor.

The protein localises to the cytoplasm. Its function is as follows. NAD-binding protein involved in the addition of a carboxymethylaminomethyl (cmnm) group at the wobble position (U34) of certain tRNAs, forming tRNA-cmnm(5)s(2)U34. The protein is tRNA uridine 5-carboxymethylaminomethyl modification enzyme MnmG of Clostridium kluyveri (strain ATCC 8527 / DSM 555 / NBRC 12016 / NCIMB 10680 / K1).